The sequence spans 236 residues: Orotidine 5'-phosphate decarboxylase (236 aa).

Substrate is bound by residues Asp17, Lys39, 66-75, Thr125, Arg186, Gln195, Gly215, and Arg216; that span reads DLKFHDIPNT. Lys68 functions as the Proton donor in the catalytic mechanism.

The protein belongs to the OMP decarboxylase family. Type 1 subfamily. In terms of assembly, homodimer.

It carries out the reaction orotidine 5'-phosphate + H(+) = UMP + CO2. The protein operates within pyrimidine metabolism; UMP biosynthesis via de novo pathway; UMP from orotate: step 2/2. Functionally, catalyzes the decarboxylation of orotidine 5'-monophosphate (OMP) to uridine 5'-monophosphate (UMP). This is Orotidine 5'-phosphate decarboxylase from Buchnera aphidicola subsp. Schizaphis graminum (strain Sg).